We begin with the raw amino-acid sequence, 788 residues long: Histidine--tRNA ligase, cytoplasmic (788 aa).

The tract at residues 252–286 (PQACEENEAGSSTENPHASGEKPKGDKKSKKKKTL) is disordered.

The protein belongs to the class-II aminoacyl-tRNA synthetase family. In terms of assembly, homodimer.

It carries out the reaction tRNA(His) + L-histidine + ATP = L-histidyl-tRNA(His) + AMP + diphosphate + H(+). This chain is Histidine--tRNA ligase, cytoplasmic, found in Oryza sativa subsp. japonica (Rice).